Reading from the N-terminus, the 150-residue chain is MKVVFLEDVKGQGKKGQIKEVPTGYAQNFLIKKNLAKVATAAALSEVKGQAKAKEKEEAEFLAEAKALKEVLEKDETVVEIKMKVGQTGHTFGAVDKADIAKALKSQFGLKLDKRKIQLINKIQALGTKDVPVKLHRDVTAVVKVKISEA.

The protein belongs to the bacterial ribosomal protein bL9 family.

Functionally, binds to the 23S rRNA. In Lactococcus lactis subsp. cremoris (strain MG1363), this protein is Large ribosomal subunit protein bL9.